A 217-amino-acid chain; its full sequence is Thymidylate kinase (217 aa).

7–14 (GIDGAGKS) is an ATP binding site.

Belongs to the thymidylate kinase family.

It catalyses the reaction dTMP + ATP = dTDP + ADP. In terms of biological role, phosphorylation of dTMP to form dTDP in both de novo and salvage pathways of dTTP synthesis. In Chlorobaculum parvum (strain DSM 263 / NCIMB 8327) (Chlorobium vibrioforme subsp. thiosulfatophilum), this protein is Thymidylate kinase.